Reading from the N-terminus, the 65-residue chain is Large ribosomal subunit protein bL33m (65 aa).

Residues 1–8 constitute a mitochondrion transit peptide; that stretch reads MFLSAVTF.

It belongs to the bacterial ribosomal protein bL33 family. Component of the mitochondrial ribosome large subunit (39S) which comprises a 16S rRNA and about 50 distinct proteins.

It localises to the mitochondrion. The sequence is that of Large ribosomal subunit protein bL33m (MRPL33) from Bos taurus (Bovine).